Here is a 1247-residue protein sequence, read N- to C-terminus: E3 ubiquitin-protein ligase hecw-1 (1247 aa).

The region spanning 602–635 is the WW 1 domain; the sequence is TPPESHWKTYLDAKKRKFYVNHVTKETRWTKPDT. Residues 633-659 are disordered; the sequence is PDTLNNNHIEPETPVHKRLSDRSASPR. The segment covering 641–653 has biased composition (basic and acidic residues); the sequence is IEPETPVHKRLSD. A WW 2 domain is found at 745–777; it reads QPLPSGWECITMNNRTVFLNHANKETSFYDPRI. The region spanning 914-1247 is the HECT domain; the sequence is DPFVLKKSRL…IVNGMSYSIE (334 aa). C1215 serves as the catalytic Glycyl thioester intermediate.

Expressed in the nervous system throughout the body. In the anterior ganglion, expression is limited to the two lateral outer labial neurons OLLL and OLLR.

The protein resides in the cytoplasm. It carries out the reaction S-ubiquitinyl-[E2 ubiquitin-conjugating enzyme]-L-cysteine + [acceptor protein]-L-lysine = [E2 ubiquitin-conjugating enzyme]-L-cysteine + N(6)-ubiquitinyl-[acceptor protein]-L-lysine.. It functions in the pathway protein modification; protein ubiquitination. E3 ubiquitin-protein ligase. Functions in the OLL neurons in the anterior ganglion to inhibit avoidance to microbial pathogens such as P.aeruginosa although worms do display avoidance behavior, vacating a P.aeruginosa lawn within 24 hours. Likely to act by inhibiting the neuropeptide receptor npr-1. The sequence is that of E3 ubiquitin-protein ligase hecw-1 from Caenorhabditis elegans.